Consider the following 32-residue polypeptide: uncharacterized protein (32 aa).

This is an uncharacterized protein from Treponema pallidum (strain Nichols).